Here is a 575-residue protein sequence, read N- to C-terminus: Homocysteine/cysteine synthase (575 aa).

An N6-(pyridoxal phosphate)lysine modification is found at lysine 376.

Belongs to the trans-sulfuration enzymes family. MET7 subfamily. It depends on pyridoxal 5'-phosphate as a cofactor.

Its subcellular location is the cytoplasm. The enzyme catalyses O-acetyl-L-homoserine + methanethiol = L-methionine + acetate + H(+). It carries out the reaction O-acetyl-L-homoserine + hydrogen sulfide = L-homocysteine + acetate. It catalyses the reaction O-acetyl-L-serine + hydrogen sulfide = L-cysteine + acetate. The protein operates within amino-acid biosynthesis; L-methionine biosynthesis via de novo pathway; L-homocysteine from O-acetyl-L-homoserine. Its function is as follows. Plays a role in inorganic sulfur assimilation during sulfur-limited conditions; catalyzes the conversion of O-acetyl-L-homoserine (OAH) into homocysteine in the methionine biosynthesis pathway. Also catalyzes the conversion of O-acetylserine (OAS) into cysteine, the last step in the cysteine biosynthesis pathway. However, it seems that in S.cerevisiae cysteine biosynthesis occurs exclusively through the cystathionine pathway and not via direct incorporation of sulfur into OAS. It therefore has no metabolic role in cysteine biosynthesis and may only have a regulatory role controlling OAS levels. The protein is Homocysteine/cysteine synthase of Saccharomyces cerevisiae (strain ATCC 204508 / S288c) (Baker's yeast).